Consider the following 155-residue polypeptide: Large ribosomal subunit protein uL30 (155 aa).

Belongs to the universal ribosomal protein uL30 family. Part of the 50S ribosomal subunit.

The polypeptide is Large ribosomal subunit protein uL30 (Pyrococcus horikoshii (strain ATCC 700860 / DSM 12428 / JCM 9974 / NBRC 100139 / OT-3)).